Consider the following 393-residue polypeptide: Methylthioribose kinase (393 aa).

Residues N38, K53, and 107-109 (EDL) each bind ATP. D225 is a substrate binding site. ATP is bound at residue 242–244 (DPE). R332 contributes to the substrate binding site.

It belongs to the methylthioribose kinase family. In terms of assembly, homodimer.

The enzyme catalyses 5-(methylsulfanyl)-D-ribose + ATP = 5-(methylsulfanyl)-alpha-D-ribose 1-phosphate + ADP + H(+). It participates in amino-acid biosynthesis; L-methionine biosynthesis via salvage pathway; S-methyl-5-thio-alpha-D-ribose 1-phosphate from S-methyl-5'-thioadenosine (hydrolase route): step 2/2. Catalyzes the phosphorylation of methylthioribose into methylthioribose-1-phosphate. This Bacillus cereus (strain G9842) protein is Methylthioribose kinase.